A 502-amino-acid polypeptide reads, in one-letter code: ATP synthase subunit alpha (502 aa).

The tract at residues 115-137 (VDGLGPVETTETRPIESPAPGVM) is disordered. Residue 169 to 176 (GDRQTGKT) coordinates ATP.

This sequence belongs to the ATPase alpha/beta chains family. In terms of assembly, F-type ATPases have 2 components, CF(1) - the catalytic core - and CF(0) - the membrane proton channel. CF(1) has five subunits: alpha(3), beta(3), gamma(1), delta(1), epsilon(1). CF(0) has three main subunits: a(1), b(2) and c(9-12). The alpha and beta chains form an alternating ring which encloses part of the gamma chain. CF(1) is attached to CF(0) by a central stalk formed by the gamma and epsilon chains, while a peripheral stalk is formed by the delta and b chains.

It is found in the cell membrane. It catalyses the reaction ATP + H2O + 4 H(+)(in) = ADP + phosphate + 5 H(+)(out). Produces ATP from ADP in the presence of a proton gradient across the membrane. The alpha chain is a regulatory subunit. The protein is ATP synthase subunit alpha of Geobacillus stearothermophilus (Bacillus stearothermophilus).